The sequence spans 563 residues: Protein NRT1/ PTR FAMILY 5.9 (563 aa).

A helical membrane pass occupies residues 56–76 (TWAGFTSMLPLFSAPLADTYW). At Thr81 the chain carries Phosphothreonine. 10 consecutive transmembrane segments (helical) span residues 82–102 (ILASSSVYFVGLVGLTWTAFA), 110–130 (TISSYFLYSSLCLVSIGLGVL), 168–188 (FFQLWYFGVCTGSLMGVTVMA), 194–214 (FGWVLGFAIPGIVIFLSILVF), 317–337 (FPIWMMLLMFAVIFQLPATFF), 362–382 (TITLSIILLMPLYDKILIPIT), 394–414 (VMERMGVGMFLSIIAIVIAAI), 441–461 (IFWLLPQYILLGISDIFTVVG), 479–499 (FALYTSVFGVGSFVSAALISI), and 528–548 (WLLALTSTISFVVYIFLCKFF).

This sequence belongs to the major facilitator superfamily. Proton-dependent oligopeptide transporter (POT/PTR) (TC 2.A.17) family. In terms of tissue distribution, expressed in roots and flowers.

It localises to the membrane. In Arabidopsis thaliana (Mouse-ear cress), this protein is Protein NRT1/ PTR FAMILY 5.9 (NPF5.9).